Here is a 343-residue protein sequence, read N- to C-terminus: MNGSLNIRGLPKLTTSTSISVSSTSASSTLSTTTLSSNSIISSITTDTSGTSTSSRDVSSGQSTLNSISTTSSIIVPSITPPSAAKNPNVWHSEDSDGTVFIAVGSIIGGIFGGVLIWWMITSYLSHVKTKKAYHSDMEEQYMSHLNGGSPHKVGSYHDDKSKIENPFSSFYMDDLESSNKKKYSRVSLVSDNPFDEDLDYALDTTEQVRYNPIQDETNHYANKKDTLFISPTKEVLQQQRQRRESKLFDNPSELPSTPPSNFKTLMLKPERSASPERKSRSPIRQHRKNNSSVQLTPLKLDSGEDDFKKTPTKKKNVNNSNNNNKHKKTPSMYLDDMLENDN.

The disordered stretch occupies residues 45 to 65 (TTDTSGTSTSSRDVSSGQSTL). Residues 101–121 (FIAVGSIIGGIFGGVLIWWMI) form a helical membrane-spanning segment. A disordered region spans residues 235-343 (EVLQQQRQRR…YLDDMLENDN (109 aa)). The segment covering 254–264 (ELPSTPPSNFK) has biased composition (polar residues). Over residues 269–280 (KPERSASPERKS) the composition is skewed to basic and acidic residues. A compositionally biased stretch (basic residues) spans 281–290 (RSPIRQHRKN).

Belongs to the PRM5 family.

Its subcellular location is the vacuole membrane. The polypeptide is Vacuolar membrane protein Kpol_1003p17 (Vanderwaltozyma polyspora (strain ATCC 22028 / DSM 70294 / BCRC 21397 / CBS 2163 / NBRC 10782 / NRRL Y-8283 / UCD 57-17) (Kluyveromyces polysporus)).